The chain runs to 176 residues: Tubulin polymerization-promoting protein family member 3 (176 aa).

N-acetylalanine is present on A2. Positions 132 to 152 (TGSHKERFDESGKGKGIAGRQ) are disordered. Basic and acidic residues predominate over residues 134-144 (SHKERFDESGK).

Belongs to the TPPP family.

It localises to the cytoplasm. Its subcellular location is the cytoskeleton. Regulator of microtubule dynamic that has microtubule bundling activity. Required for embryo implantation; possibly by regulating beta-catenin. Also required for decidualization via regulation of beta-catenin. The polypeptide is Tubulin polymerization-promoting protein family member 3 (Mus musculus (Mouse)).